A 187-amino-acid chain; its full sequence is Elongation factor P (187 aa).

This sequence belongs to the elongation factor P family.

The protein localises to the cytoplasm. It participates in protein biosynthesis; polypeptide chain elongation. Its function is as follows. Involved in peptide bond synthesis. Stimulates efficient translation and peptide-bond synthesis on native or reconstituted 70S ribosomes in vitro. Probably functions indirectly by altering the affinity of the ribosome for aminoacyl-tRNA, thus increasing their reactivity as acceptors for peptidyl transferase. The sequence is that of Elongation factor P from Mycobacterium avium (strain 104).